Here is a 121-residue protein sequence, read N- to C-terminus: Prefoldin subunit beta (121 aa).

This sequence belongs to the prefoldin subunit beta family. In terms of assembly, heterohexamer of two alpha and four beta subunits.

The protein resides in the cytoplasm. Functionally, molecular chaperone capable of stabilizing a range of proteins. Seems to fulfill an ATP-independent, HSP70-like function in archaeal de novo protein folding. This chain is Prefoldin subunit beta, found in Methanosphaerula palustris (strain ATCC BAA-1556 / DSM 19958 / E1-9c).